The primary structure comprises 294 residues: Acetyl-coenzyme A carboxylase carboxyl transferase subunit beta (294 aa).

A CoA carboxyltransferase N-terminal domain is found at 30–294 (IMTKCPECKK…PETGGESDGE (265 aa)). Residues Cys-34, Cys-37, Cys-53, and Cys-56 each coordinate Zn(2+). The segment at 34 to 56 (CPECKKIMYTKELQKNLMVCNYC) adopts a C4-type zinc-finger fold.

Belongs to the AccD/PCCB family. In terms of assembly, acetyl-CoA carboxylase is a heterohexamer composed of biotin carboxyl carrier protein (AccB), biotin carboxylase (AccC) and two subunits each of ACCase subunit alpha (AccA) and ACCase subunit beta (AccD). Requires Zn(2+) as cofactor.

It is found in the cytoplasm. The catalysed reaction is N(6)-carboxybiotinyl-L-lysyl-[protein] + acetyl-CoA = N(6)-biotinyl-L-lysyl-[protein] + malonyl-CoA. It functions in the pathway lipid metabolism; malonyl-CoA biosynthesis; malonyl-CoA from acetyl-CoA: step 1/1. Component of the acetyl coenzyme A carboxylase (ACC) complex. Biotin carboxylase (BC) catalyzes the carboxylation of biotin on its carrier protein (BCCP) and then the CO(2) group is transferred by the transcarboxylase to acetyl-CoA to form malonyl-CoA. This Listeria welshimeri serovar 6b (strain ATCC 35897 / DSM 20650 / CCUG 15529 / CIP 8149 / NCTC 11857 / SLCC 5334 / V8) protein is Acetyl-coenzyme A carboxylase carboxyl transferase subunit beta.